Here is a 208-residue protein sequence, read N- to C-terminus: AN1-type zinc finger protein 6 (208 aa).

Residues S8–N42 form an A20-type zinc finger. The Zn(2+) site is built by C14, C18, C30, and C33. Residues Q41–V110 are disordered. Position 49 is a phosphoserine (S49). Polar residues predominate over residues S54–D68. The segment covering S83 to S94 has biased composition (low complexity). A compositionally biased stretch (polar residues) spans L95–V110. An AN1-type zinc finger spans residues K143–A189. C149, C152, C163, C165, C170, H173, H179, and C181 together coordinate Zn(2+). K204 is subject to N6-acetyllysine.

As to quaternary structure, interacts with PKN1.

This chain is AN1-type zinc finger protein 6 (ZFAND6), found in Bos taurus (Bovine).